A 326-amino-acid polypeptide reads, in one-letter code: Methionine import ATP-binding protein MetN (326 aa).

An ABC transporter domain is found at 1–226 (MVFYTIGPQT…PQQPITRQFV (226 aa)). 23–30 (GYSGAGKS) lines the ATP pocket.

It belongs to the ABC transporter superfamily. Methionine importer (TC 3.A.1.24) family. As to quaternary structure, the complex is composed of two ATP-binding proteins (MetN), two transmembrane proteins (MetI) and a solute-binding protein (MetQ).

It is found in the cell inner membrane. The catalysed reaction is L-methionine(out) + ATP + H2O = L-methionine(in) + ADP + phosphate + H(+). It carries out the reaction D-methionine(out) + ATP + H2O = D-methionine(in) + ADP + phosphate + H(+). Part of the ABC transporter complex MetNIQ involved in methionine import. Responsible for energy coupling to the transport system. The sequence is that of Methionine import ATP-binding protein MetN from Erwinia pyrifoliae (strain DSM 12162 / Ep1/96).